A 399-amino-acid polypeptide reads, in one-letter code: Keratin, type I cytoskeletal 19 (399 aa).

The tract at residues 1-78 (MTSYSYRQSS…ATSDGLLAGN (78 aa)) is head. Arg-7 carries the omega-N-methylarginine modification. 2 positions are modified to phosphoserine: Ser-14 and Ser-22. The residue at position 24 (Arg-24) is an Asymmetric dimethylarginine; alternate. Residue Arg-24 is modified to Omega-N-methylarginine; alternate. An Omega-N-methylarginine modification is found at Arg-32. A phosphoserine mark is found at Ser-35 and Ser-40. Omega-N-methylarginine occurs at positions 43 and 51. A phosphoserine mark is found at Ser-57 and Ser-71. A coil 1A region spans residues 79–114 (EKLTMQNLNDRLASYLEKVRALEEANGDLEVKIRDW). An IF rod domain is found at 79-390 (EKLTMQNLND…NLLEGQDAYF (312 aa)). Residues 115 to 132 (YQKQGPGPARDYSHYFKT) form a linker 1 region. The coil 1B stretch occupies residues 133–224 (IEDLRDQILG…KNHEEEMSVL (92 aa)). The tract at residues 225–247 (KGQVGGQVSVEVDSAPGIDLAKI) is linker 12. The interval 243-389 (DLAKILSDMR…RNLLEGQDAY (147 aa)) is necessary for interaction with PNN. A coil 2 region spans residues 248–386 (LSDMRSQYEV…ATYRNLLEGQ (139 aa)). Phosphothreonine is present on Thr-322. The segment at 387–399 (DAYFNDLSLAKAL) is rod-like helical tail. Position 394 is a phosphoserine (Ser-394).

The protein belongs to the intermediate filament family. In terms of assembly, heterotetramer of two type I and two type II keratins. Interacts with PNN and the actin-binding domain of DMD.

In terms of biological role, involved in the organization of myofibers. Together with KRT8, helps to link the contractile apparatus to dystrophin at the costameres of striated muscle. In Bos taurus (Bovine), this protein is Keratin, type I cytoskeletal 19 (KRT19).